The chain runs to 309 residues: Ribosomal RNA small subunit methyltransferase H (309 aa).

S-adenosyl-L-methionine is bound by residues 33–35 (GGH), D53, F79, D100, and Q107.

The protein belongs to the methyltransferase superfamily. RsmH family.

It is found in the cytoplasm. It catalyses the reaction cytidine(1402) in 16S rRNA + S-adenosyl-L-methionine = N(4)-methylcytidine(1402) in 16S rRNA + S-adenosyl-L-homocysteine + H(+). In terms of biological role, specifically methylates the N4 position of cytidine in position 1402 (C1402) of 16S rRNA. This Clostridium botulinum (strain Kyoto / Type A2) protein is Ribosomal RNA small subunit methyltransferase H.